The primary structure comprises 92 residues: Small ribosomal subunit protein uS19 (92 aa).

This sequence belongs to the universal ribosomal protein uS19 family.

Protein S19 forms a complex with S13 that binds strongly to the 16S ribosomal RNA. The sequence is that of Small ribosomal subunit protein uS19 from Desulfatibacillum aliphaticivorans.